The sequence spans 377 residues: Cyclin-I (377 aa).

The tract at residues 356–377 (TDLSRQEGHASPCPPLQPVSVM) is disordered. Positions 367–377 (PCPPLQPVSVM) are enriched in pro residues.

It belongs to the cyclin family.

This is Cyclin-I (Ccni) from Mus musculus (Mouse).